The primary structure comprises 206 residues: Small ribosomal subunit protein uS7 (206 aa).

It belongs to the universal ribosomal protein uS7 family. Component of the small ribosomal subunit.

The protein resides in the cytoplasm. Functionally, component of the small ribosomal subunit. The ribosome is a large ribonucleoprotein complex responsible for the synthesis of proteins in the cell. The chain is Small ribosomal subunit protein uS7 from Entamoeba histolytica (strain ATCC 30459 / HM-1:IMSS / ABRM).